The primary structure comprises 279 residues: Digeranylgeranylglyceryl phosphate synthase (279 aa).

Helical transmembrane passes span 5–25 (GFFA…AIVA), 27–47 (LIAT…VLLV), 90–110 (FLLG…IALV), 127–147 (FFGN…GGAY), 148–168 (AGWH…LAML), 198–218 (KTAL…AVPY), 219–239 (LWWG…ILFA), and 259–279 (TLLK…AVFL).

The protein belongs to the UbiA prenyltransferase family. DGGGP synthase subfamily. Mg(2+) is required as a cofactor.

The protein resides in the cell membrane. The enzyme catalyses sn-3-O-(geranylgeranyl)glycerol 1-phosphate + (2E,6E,10E)-geranylgeranyl diphosphate = 2,3-bis-O-(geranylgeranyl)-sn-glycerol 1-phosphate + diphosphate. Its pathway is membrane lipid metabolism; glycerophospholipid metabolism. In terms of biological role, prenyltransferase that catalyzes the transfer of the geranylgeranyl moiety of geranylgeranyl diphosphate (GGPP) to the C2 hydroxyl of (S)-3-O-geranylgeranylglyceryl phosphate (GGGP). This reaction is the second ether-bond-formation step in the biosynthesis of archaeal membrane lipids. This Methanoregula boonei (strain DSM 21154 / JCM 14090 / 6A8) protein is Digeranylgeranylglyceryl phosphate synthase.